A 519-amino-acid polypeptide reads, in one-letter code: Polyamine aminopropyltransferase (519 aa).

7 helical membrane passes run 17 to 37 (LLLV…LALV), 53 to 73 (LIVA…KPFL), 86 to 106 (LLGL…AVVG), 109 to 129 (LWML…ELPL), 158 to 178 (LGAL…LGMM), 180 to 200 (GAAA…CVLL), and 208 to 228 (QFIR…TVLV). The spermidine synthase stretch occupies residues 200 to 463 (LRHLLPRAQF…FQLCGPEGTE (264 aa)). A PABS domain is found at 225-459 (TVLVRSDGIV…GDWGFQLCGP (235 aa)). Residue Q255 coordinates S-methyl-5'-thioadenosine. Spermidine is bound at residue D307. Residues E326 and 358 to 359 (DA) contribute to the S-methyl-5'-thioadenosine site. The active-site Proton acceptor is D379.

The protein belongs to the spermidine/spermine synthase family. In terms of assembly, homodimer or homotetramer.

The protein localises to the cell membrane. It carries out the reaction S-adenosyl 3-(methylsulfanyl)propylamine + putrescine = S-methyl-5'-thioadenosine + spermidine + H(+). The protein operates within amine and polyamine biosynthesis; spermidine biosynthesis; spermidine from putrescine: step 1/1. Its function is as follows. Catalyzes the irreversible transfer of a propylamine group from the amino donor S-adenosylmethioninamine (decarboxy-AdoMet) to putrescine (1,4-diaminobutane) to yield spermidine. The sequence is that of Polyamine aminopropyltransferase from Corynebacterium efficiens (strain DSM 44549 / YS-314 / AJ 12310 / JCM 11189 / NBRC 100395).